Here is a 407-residue protein sequence, read N- to C-terminus: MEIILGVVMFTLIVLALTVMILFAKSKLVNTGDITVEINEDEDKSFTAPAGDKLLNMLSSHGIFVSSACGGGGSCGQCRVTIKEGGGDILPTELSHISKREAKEGCRLACQVNVKQNLKIELPEEIFGVKKWTCEVISNDNKATFIKELKLKIPDGDVVPFRAGGFIQIEAEPHTVKYADFDVPTEYRGDWDKFNLFRFESVATEPTVRAYSMANYPEEHGIILLNVRIATPPPSVPDAPPGIMSSYIWSLKPGDKVVISGPFGEFFAKDTDAEMVFIGGGAGMAPMRSHIFDQLKRLHSKRKISFWYGARSRREMFYEEDFDQLQAENDNFRWHVALSDPQPEDNWTGYTGFIHNVLLENYLKDHPAPEDCEFYMCGPPMMNAAVIKMLKDLGVEDENIMLDDFGG.

Residues 3–23 form a helical membrane-spanning segment; the sequence is IILGVVMFTLIVLALTVMILF. The 95-residue stretch at 32 to 126 folds into the 2Fe-2S ferredoxin-type domain; it reads GDITVEINED…NLKIELPEEI (95 aa). The [2Fe-2S] cluster site is built by Cys69, Cys75, Cys78, and Cys110. Positions 129 to 269 constitute an FAD-binding FR-type domain; that stretch reads VKKWTCEVIS…SGPFGEFFAK (141 aa).

The protein belongs to the NqrF family. In terms of assembly, composed of six subunits; NqrA, NqrB, NqrC, NqrD, NqrE and NqrF. [2Fe-2S] cluster is required as a cofactor. The cofactor is FAD.

The protein resides in the cell inner membrane. The enzyme catalyses a ubiquinone + n Na(+)(in) + NADH + H(+) = a ubiquinol + n Na(+)(out) + NAD(+). In terms of biological role, NQR complex catalyzes the reduction of ubiquinone-1 to ubiquinol by two successive reactions, coupled with the transport of Na(+) ions from the cytoplasm to the periplasm. The first step is catalyzed by NqrF, which accepts electrons from NADH and reduces ubiquinone-1 to ubisemiquinone by a one-electron transfer pathway. This is Na(+)-translocating NADH-quinone reductase subunit F from Yersinia pseudotuberculosis serotype I (strain IP32953).